The following is a 228-amino-acid chain: UPF0758 protein NT01CX_1687 (228 aa).

Positions 106-228 (IIKSPGDVAG…YISLKEKNIL (123 aa)) constitute an MPN domain. Zn(2+)-binding residues include histidine 177, histidine 179, and aspartate 190. Residues 177–190 (HNHPSGDPTPSSED) carry the JAMM motif motif.

It belongs to the UPF0758 family.

The polypeptide is UPF0758 protein NT01CX_1687 (Clostridium novyi (strain NT)).